Consider the following 519-residue polypeptide: Sterile alpha motif domain-containing protein 1 (519 aa).

A compositionally biased stretch (pro residues) spans 1–11 (MAGPPALPPPE). Disordered stretches follow at residues 1 to 30 (MAGPPALPPPETAAAATTAAAASSSAASPH) and 87 to 232 (YKGS…PVSL). Residues 12–29 (TAAAATTAAAASSSAASP) show a composition bias toward low complexity. The SAMD1-like winged helix (WH) domain occupies 23-99 (SSSAASPHYQ…SISYRNAARV (77 aa)). At Thr-107 the chain carries Phosphothreonine. The span at 108–133 (PPAPPRVPRGGPAAPPPTPAPPPAPV) shows a compositional bias: pro residues. A compositionally biased stretch (low complexity) spans 134–147 (AAPTRAPRAAAATA). Residue Ser-150 is modified to Phosphoserine. The segment covering 157–166 (GPRAQRAAPL) has biased composition (low complexity). Pro residues predominate over residues 167–217 (AAPPPAPAAPPAAAPPAGPRRAPPPAVAAREPPAPPQQQQPPPPQPQPPPE). Residues 218–230 (GGAARAGGPARPV) show a composition bias toward low complexity. Position 242 is a phosphoserine (Ser-242). Basic and acidic residues predominate over residues 261–271 (EAARGRLERTR). Disordered stretches follow at residues 261–381 (EAAR…PGSC) and 417–439 (PALPGADGTPFGCPPGRKEKPTD). A compositionally biased stretch (acidic residues) spans 308–325 (KEEEDEDEDEEEEEEDNV). The 69-residue stretch at 443–511 (WTVMDVVEYF…KVLQQGHFED (69 aa)) folds into the SAM domain.

Homopolymerize into a closed pentameric ring. Interacts (via SAM domain) with L3MBTL3 (via SAM domain); the interaction mediates L3MBTL3 binding to chromatin. Interacts (via WH domain) with KDM1A; the interaction modulates KDM1A function. In terms of tissue distribution, expressed to similar levels in different organs. Expressed at higher levels in bone marrow, osteoclasts and spleen. Expressed in vascular smooth muscle cells.

The protein localises to the nucleus. Its subcellular location is the chromosome. The protein resides in the secreted. Its function is as follows. Unmethylated CpG islands (CGIs)-binding protein which localizes to H3K4me3-decorated CGIs, where it acts as a transcriptional repressor. Tethers L3MBTL3 to chromatin and interacts with the KDM1A histone demethylase complex to modulate H3K4me2 and H3K4me3 levels at CGIs. Plays a role in atherogenesis by binding with LDL on cell surface and promoting LDL oxidation which leads to the formation of foam cell. This Mus musculus (Mouse) protein is Sterile alpha motif domain-containing protein 1.